Reading from the N-terminus, the 423-residue chain is Glucoside xylosyltransferase 2 (423 aa).

The Cytoplasmic segment spans residues Met-1–Lys-6. A helical; Signal-anchor for type II membrane protein transmembrane segment spans residues Phe-7 to Gly-26. Over Asn-27 to Val-423 the chain is Lumenal. Residues Arg-60 to Pro-85 form a disordered region. N-linked (GlcNAc...) asparagine glycans are attached at residues Asn-215 and Asn-256.

It belongs to the glycosyltransferase 8 family.

It is found in the membrane. It carries out the reaction 3-O-(beta-D-glucosyl)-L-seryl-[EGF-like domain protein] + UDP-alpha-D-xylose = 3-O-[alpha-D-xylosyl-(1-&gt;3)-beta-D-glucosyl]-L-seryl-[EGF-like domain protein] + UDP + H(+). Glycosyltransferase which elongates the O-linked glucose attached to EGF-like repeats in the extracellular domain of Notch proteins by catalyzing the addition of xylose. This Xenopus laevis (African clawed frog) protein is Glucoside xylosyltransferase 2 (gxylt2).